Consider the following 334-residue polypeptide: Cathepsin K (334 aa).

Residues 1–19 form the signal peptide; it reads MLRLHWLALLVLLLPMAAA. Positions 20–119 are cleaved as a propeptide — activation peptide; that stretch reads QLRPEPELDA…TLYVPDWSSR (100 aa). N-linked (GlcNAc...) asparagine glycosylation occurs at N108. Cystine bridges form between C141–C182, C175–C215, and C274–C323. Residue C144 is part of the active site. Active-site residues include H281 and N301.

This sequence belongs to the peptidase C1 family.

The catalysed reaction is Broad proteolytic activity. With small-molecule substrates and inhibitors, the major determinant of specificity is P2, which is preferably Leu, Met &gt; Phe, and not Arg.. Its function is as follows. Closely involved in osteoclastic bone resorption and may participate partially in the disorder of bone remodeling. Displays potent endoprotease activity against fibrinogen at acid pH. May play an important role in extracellular matrix degradation. The sequence is that of Cathepsin K (CTSK) from Gallus gallus (Chicken).